The chain runs to 124 residues: Small ribosomal subunit protein uS12 (124 aa).

The residue at position 89 (D89) is a 3-methylthioaspartic acid. The disordered stretch occupies residues 104–124 (TQGVKNRGQARSRYGAKKEKK). A compositionally biased stretch (basic residues) spans 111–124 (GQARSRYGAKKEKK).

This sequence belongs to the universal ribosomal protein uS12 family. As to quaternary structure, part of the 30S ribosomal subunit. Contacts proteins S8 and S17. May interact with IF1 in the 30S initiation complex.

Functionally, with S4 and S5 plays an important role in translational accuracy. Its function is as follows. Interacts with and stabilizes bases of the 16S rRNA that are involved in tRNA selection in the A site and with the mRNA backbone. Located at the interface of the 30S and 50S subunits, it traverses the body of the 30S subunit contacting proteins on the other side and probably holding the rRNA structure together. The combined cluster of proteins S8, S12 and S17 appears to hold together the shoulder and platform of the 30S subunit. This Micrococcus luteus (strain ATCC 4698 / DSM 20030 / JCM 1464 / CCM 169 / CCUG 5858 / IAM 1056 / NBRC 3333 / NCIMB 9278 / NCTC 2665 / VKM Ac-2230) (Micrococcus lysodeikticus) protein is Small ribosomal subunit protein uS12.